Consider the following 423-residue polypeptide: Limonoid 21-O-acetyltransferse (423 aa).

Catalysis depends on proton acceptor residues His-152 and Asp-362.

This sequence belongs to the plant acyltransferase family. Monomer. As to expression, mainly expressed in petioles.

It carries out the reaction isomeliandiol + acetyl-CoA = 21-O-acetyl-isomeliandiol + CoA. The protein operates within secondary metabolite biosynthesis; terpenoid biosynthesis. Functionally, acetyltransferase involved in the biosynthesis of limonoids triterpene natural products such as azadirachtin, an antifeedant widely used as bioinsecticide, and possessing many medicinal applications including anti-tumoral, anti-malarial, anti-rheumatic, antibacterial, anti-inflammatory, anti-pyretic and diuretic effects. Catalyzes the formation of 21-O-acetyl-isomeliandiol from isomeliandiol. The protein is Limonoid 21-O-acetyltransferse of Melia azedarach (Chinaberry tree).